We begin with the raw amino-acid sequence, 773 residues long: Carnitine O-palmitoyltransferase 1, liver isoform (773 aa).

Alanine 2 is subject to N-acetylalanine. Over 2–47 the chain is Cytoplasmic; that stretch reads AEAHQAVAFQFTVTPDGIDLRLSHEALRQIYLSGLHSWKKKFIRFK. The helical transmembrane segment at 48-73 threads the bilayer; it reads NGIITGVYPASPSSWLIVVVGVMTTM. The Mitochondrial intermembrane portion of the chain corresponds to 74-102; that stretch reads YAKIDPSLGIIAKINRTLETANCMSSQTK. Residues 103-122 traverse the membrane as a helical segment; sequence NVVSGVLFGTGLWVALIVTM. Residues 123-773 lie on the Cytoplasmic side of the membrane; sequence RYSLKVLLSY…LFGLSSNSKK (651 aa). Residue tyrosine 282 is modified to 3'-nitrotyrosine. Histidine 473 (proton acceptor) is an active-site residue. 555–567 contacts CoA; sequence GKGIIKKCRTSPD. A Phosphothreonine modification is found at threonine 588. The residue at position 589 (tyrosine 589) is a 3'-nitrotyrosine. (R)-carnitine contacts are provided by tyrosine 589 and threonine 602. Threonine 604 is modified (phosphothreonine). Phosphoserine is present on residues serine 741 and serine 747.

It belongs to the carnitine/choline acetyltransferase family. Homohexamer and homotrimer. Identified in a complex that contains at least CPT1A, ACSL1 and VDAC1. Also identified in complexes with ACSL1 and VDAC2 and VDAC3. Interacts with ZDHHC4. As to expression, strong expression in kidney and heart, and lower in liver and skeletal muscle.

The protein resides in the mitochondrion outer membrane. The catalysed reaction is (R)-carnitine + hexadecanoyl-CoA = O-hexadecanoyl-(R)-carnitine + CoA. It carries out the reaction succinyl-CoA + L-lysyl-[protein] = N(6)-succinyl-L-lysyl-[protein] + CoA + H(+). It participates in lipid metabolism; fatty acid beta-oxidation. Inhibited by malonyl-CoA. Its function is as follows. Catalyzes the transfer of the acyl group of long-chain fatty acid-CoA conjugates onto carnitine, an essential step for the mitochondrial uptake of long-chain fatty acids and their subsequent beta-oxidation in the mitochondrion. Also possesses a lysine succinyltransferase activity that can regulate enzymatic activity of substrate proteins such as ENO1 and metabolism independent of its classical carnitine O-palmitoyltransferase activity. Plays an important role in hepatic triglyceride metabolism. Also plays a role in inducible regulatory T-cell (iTreg) differentiation once activated by butyryl-CoA that antagonizes malonyl-CoA-mediated CPT1A repression. Sustains the IFN-I response by recruiting ZDHCC4 to palmitoylate MAVS at the mitochondria leading to MAVS stabilization and activation. Promotes ROS-induced oxidative stress in liver injury via modulation of NFE2L2 and NLRP3-mediated signaling pathways. This is Carnitine O-palmitoyltransferase 1, liver isoform from Homo sapiens (Human).